The sequence spans 79 residues: WAP four-disulfide core domain protein 10A (79 aa).

An N-terminal signal peptide occupies residues 1 to 21 (MAPQTLLPVLVLCVLLLQAQG). Residues 34-79 (LSPEIKVCQQQPKLYLCKHLCESHRDCQANNICCSTYCGNVCMSIL) form the WAP domain. Cystine bridges form between Cys41/Cys67, Cys50/Cys71, Cys54/Cys66, and Cys60/Cys75.

Its subcellular location is the secreted. The sequence is that of WAP four-disulfide core domain protein 10A (WFDC10A) from Homo sapiens (Human).